The following is a 629-amino-acid chain: tRNA uridine 5-carboxymethylaminomethyl modification enzyme MnmG (629 aa).

FAD is bound by residues 15–20 (GAGHAG), V127, and S182. The segment at 203–226 (TPPRVKSSTIDYSKTEEQPGDDHP) is disordered. Basic and acidic residues predominate over residues 215–226 (SKTEEQPGDDHP). NAD(+) is bound at residue 274 to 288 (GARYCPSIEDKIVRF). Q371 provides a ligand contact to FAD.

This sequence belongs to the MnmG family. Homodimer. Heterotetramer of two MnmE and two MnmG subunits. The cofactor is FAD.

Its subcellular location is the cytoplasm. In terms of biological role, NAD-binding protein involved in the addition of a carboxymethylaminomethyl (cmnm) group at the wobble position (U34) of certain tRNAs, forming tRNA-cmnm(5)s(2)U34. This is tRNA uridine 5-carboxymethylaminomethyl modification enzyme MnmG from Listeria innocua serovar 6a (strain ATCC BAA-680 / CLIP 11262).